A 746-amino-acid chain; its full sequence is Probably inactive copalyl diphosphate synthase 3 (746 aa).

The short motif at 331 to 334 is the DXDD motif; degenerated element; that stretch reads DVND.

It belongs to the terpene synthase family. Tpsc subfamily. As to expression, mostly expressed in stems, and, at low levels, in roots and leaves, but barely in flowers.

The sequence is that of Probably inactive copalyl diphosphate synthase 3 from Isodon rubescens (Rabdosia rubescens).